A 339-amino-acid polypeptide reads, in one-letter code: Phosphate acyltransferase (339 aa).

Belongs to the PlsX family. Homodimer. Probably interacts with PlsY.

The protein localises to the cytoplasm. The catalysed reaction is a fatty acyl-[ACP] + phosphate = an acyl phosphate + holo-[ACP]. The protein operates within lipid metabolism; phospholipid metabolism. Catalyzes the reversible formation of acyl-phosphate (acyl-PO(4)) from acyl-[acyl-carrier-protein] (acyl-ACP). This enzyme utilizes acyl-ACP as fatty acyl donor, but not acyl-CoA. The chain is Phosphate acyltransferase from Helicobacter pylori (strain Shi470).